We begin with the raw amino-acid sequence, 141 residues long: Nucleoside diphosphate kinase (141 aa).

Lys11, Phe59, Arg87, Thr93, Arg104, and Asn114 together coordinate ATP. The active-site Pros-phosphohistidine intermediate is the His117.

The protein belongs to the NDK family. Homotetramer. Requires Mg(2+) as cofactor.

It is found in the cytoplasm. The enzyme catalyses a 2'-deoxyribonucleoside 5'-diphosphate + ATP = a 2'-deoxyribonucleoside 5'-triphosphate + ADP. It carries out the reaction a ribonucleoside 5'-diphosphate + ATP = a ribonucleoside 5'-triphosphate + ADP. Its function is as follows. Major role in the synthesis of nucleoside triphosphates other than ATP. The ATP gamma phosphate is transferred to the NDP beta phosphate via a ping-pong mechanism, using a phosphorylated active-site intermediate. This chain is Nucleoside diphosphate kinase, found in Polynucleobacter necessarius subsp. necessarius (strain STIR1).